The sequence spans 949 residues: MSKKRLHEIAKEIGKTSKEVVEKAKSLGLDVKSHASSVSEEDAKKIVSTFTEKPKTETKPKIKAVDETPKPKLEAVKEEVKVEKTQTVQETVNPTVARPKSRNFKAEREARAKEQAARQKRNAQESTERRQDNRYQQKNDQGSKNRNFNKSQGQAKDRRFDAKGSQQNNRQDSRIASNKPNHNDKFNAANRNQNNSQQERQVGAARIDFKARAAALKAEQNAEYMRHKETQLREQEEARRLAERAKEEARLAAQKAAEEKAKEAEKAAKTERFEPKSAVASTVAPEAVKPVDKRRKKARPEKSYEDQSSNENGPKQNKKSWNNQNQVRNQRNSNWNKKPKKGKNAKNNTVAPKPVTERKFHELPKEFEYTEGMTVVEIAKRIKREPAEIVKKLFMMGVMATQNQSLDGDTIELLMVDYGIEAKEKVQVDDADIERFFEDDTYLNPDKLVERAPVVTIMGHVDHGKTTLLDTLRNSRVATGEAGGITQHIGAYQIEEAGKKITFLDTPGHAAFTSMRARGASVTDITILIVAADDGVMPQTIEAINHSKAAEVPIIVAINKIDKPGANPERVISELAEHGIISTAWGGDSEFVEISAKFNKNIDELLETVLLVAEVEELKADPTVRAIGTVIEARLDKGKGAVATLLVQQGTLHVQDPIVIGNTFGRVRAMTNDLGRRVKVAPPSTPVSITGLNETPMAGDHFAVYEDEKAARAAGEERAKRALLKQRQNTQRVSLDNLFDTLKAGEIKTVNVIIKADVQGSVEALAASLLKIEVEGVRVNVVHSAVGAINESDVTLAEASNAVIIGFNVRPTPQARQQAETDDVEIRLHSIIYKVIEEVEEAMKGKLDPEYKEKILGEAVIRETFKVSKVGTIGGFMVLSGKITRDSNVRVIRDSVVIFDGKLASLKHYKDDVKEVGNAQEGGLMIEKFNDLQVDDNIEAYIMEEIVRK.

Disordered stretches follow at residues 50–206 and 220–359; these read FTEK…GAAR and QNAE…TERK. Composition is skewed to basic and acidic residues over residues 52 to 84 and 104 to 143; these read EKPK…KVEK and FKAE…DQGS. Composition is skewed to polar residues over residues 144-154 and 164-180; these read KNRNFNKSQGQ and GSQQ…SNKP. Positions 187-206 are enriched in low complexity; that stretch reads NAANRNQNNSQQERQVGAAR. Over residues 224–275 the composition is skewed to basic and acidic residues; the sequence is YMRHKETQLREQEEARRLAERAKEEARLAAQKAAEEKAKEAEKAAKTERFEP. The segment covering 319–336 has biased composition (low complexity); the sequence is KSWNNQNQVRNQRNSNWN. The tr-type G domain maps to 450–619; it reads ERAPVVTIMG…LLVAEVEELK (170 aa). The G1 stretch occupies residues 459–466; that stretch reads GHVDHGKT. 459–466 contributes to the GTP binding site; sequence GHVDHGKT. Positions 484–488 are G2; that stretch reads GITQH. The G3 stretch occupies residues 505 to 508; sequence DTPG. GTP contacts are provided by residues 505-509 and 559-562; these read DTPGH and NKID. Residues 559 to 562 are G4; that stretch reads NKID. Positions 595-597 are G5; sequence SAK.

It belongs to the TRAFAC class translation factor GTPase superfamily. Classic translation factor GTPase family. IF-2 subfamily.

It localises to the cytoplasm. Its function is as follows. One of the essential components for the initiation of protein synthesis. Protects formylmethionyl-tRNA from spontaneous hydrolysis and promotes its binding to the 30S ribosomal subunits. Also involved in the hydrolysis of GTP during the formation of the 70S ribosomal complex. The chain is Translation initiation factor IF-2 from Streptococcus uberis (strain ATCC BAA-854 / 0140J).